We begin with the raw amino-acid sequence, 423 residues long: AP-1 complex subunit mu-1 (423 aa).

N-acetylserine is present on Ser2. Thr152, Thr154, and Thr223 each carry phosphothreonine. The MHD domain maps to 168 to 421 (KNEVFLDVIE…ITQNGDYQLR (254 aa)).

This sequence belongs to the adaptor complexes medium subunit family. Adaptor protein complex 1 (AP-1) is a heterotetramer composed of two large adaptins (gamma-type subunit AP1G1 and beta-type subunit AP1B1), a medium adaptin (mu-type subunit AP1M1 or AP1M2) and a small adaptin (sigma-type subunit AP1S1 or AP1S2 or AP1S3). Interacts with MARCHF11. Phosphorylation of membrane-bound AP1M1/AP1M2 increases its affinity for sorting signals.

It is found in the cytoplasmic vesicle. It localises to the clathrin-coated vesicle membrane. The protein resides in the golgi apparatus. Its function is as follows. Subunit of clathrin-associated adaptor protein complex 1 that plays a role in protein sorting in the trans-Golgi network (TGN) and endosomes. The AP complexes mediate the recruitment of clathrin to membranes and the recognition of sorting signals within the cytosolic tails of transmembrane cargo molecules. The protein is AP-1 complex subunit mu-1 of Bos taurus (Bovine).